Here is a 462-residue protein sequence, read N- to C-terminus: Sensor histidine kinase RegB (462 aa).

At 1 to 25 the chain is on the cytoplasmic side; that stretch reads MILGPDGILNRDTRGDWVRLRTLIL. Residues 26–45 form a helical membrane-spanning segment; it reads LRWMAVAGQLAAIVVTDWYL. Over 46–51 the chain is Extracellular; that stretch reads GVRLPM. A helical transmembrane segment spans residues 52-70; the sequence is GLCFMAVGASVIANVIATF. At 71-78 the chain is on the cytoplasmic side; it reads VFPQNRRL. Residues 79–96 traverse the membrane as a helical segment; the sequence is TEFQALMILLFDLTQLSF. Residues 97–103 are Extracellular-facing; that stretch reads LLFLTGG. A helical transmembrane segment spans residues 104–123; the sequence is LTNPFALLILAPVTISALAL. Over 124–129 the chain is Cytoplasmic; it reads ELRTTV. A helical membrane pass occupies residues 130–149; that stretch reads ILGAIAIGLLTFTAYFHLPL. The Extracellular segment spans residues 150 to 164; the sequence is ILADGSSLSVPRMFE. The chain crosses the membrane as a helical span at residues 165 to 182; that stretch reads FGFWLAIVIGILFLGLYS. The Cytoplasmic portion of the chain corresponds to 183–462; sequence RRVAIEIRSM…PLGENVLIQT (280 aa). Positions 218 to 445 constitute a Histidine kinase domain; sequence AAAHELGTPL…IVEVIWPVDR (228 aa). Histidine 221 is subject to Phosphohistidine; by autocatalysis.

It is found in the cell inner membrane. It carries out the reaction ATP + protein L-histidine = ADP + protein N-phospho-L-histidine.. Member of the two-component regulatory system RegB/RegA. Involved in the positive regulation of photosynthesis gene expression in response to anaerobiosis. Also involved in positive regulation of the cbbI and cbbII Calvin cycle CO2 fixation operons, as well as in regulation of expression of genes involved in alternative CO2 fixation pathways. Phosphorylates RegA/PrrA. The sequence is that of Sensor histidine kinase RegB (regB) from Cereibacter sphaeroides (strain ATCC 17023 / DSM 158 / JCM 6121 / CCUG 31486 / LMG 2827 / NBRC 12203 / NCIMB 8253 / ATH 2.4.1.) (Rhodobacter sphaeroides).